The following is a 362-amino-acid chain: Peptide chain release factor 1 (362 aa).

Position 237 is an N5-methylglutamine (Gln-237).

Belongs to the prokaryotic/mitochondrial release factor family. Methylated by PrmC. Methylation increases the termination efficiency of RF1.

It localises to the cytoplasm. In terms of biological role, peptide chain release factor 1 directs the termination of translation in response to the peptide chain termination codons UAG and UAA. The polypeptide is Peptide chain release factor 1 (Marinomonas sp. (strain MWYL1)).